The primary structure comprises 325 residues: ATP phosphoribosyltransferase (325 aa).

This sequence belongs to the ATP phosphoribosyltransferase family. Long subfamily. Mg(2+) is required as a cofactor.

The protein resides in the cytoplasm. It carries out the reaction 1-(5-phospho-beta-D-ribosyl)-ATP + diphosphate = 5-phospho-alpha-D-ribose 1-diphosphate + ATP. It participates in amino-acid biosynthesis; L-histidine biosynthesis; L-histidine from 5-phospho-alpha-D-ribose 1-diphosphate: step 1/9. Feedback inhibited by histidine. Its function is as follows. Catalyzes the condensation of ATP and 5-phosphoribose 1-diphosphate to form N'-(5'-phosphoribosyl)-ATP (PR-ATP). Has a crucial role in the pathway because the rate of histidine biosynthesis seems to be controlled primarily by regulation of HisG enzymatic activity. This chain is ATP phosphoribosyltransferase, found in Rhodopseudomonas palustris (strain BisA53).